The sequence spans 219 residues: Adenylate kinase (219 aa).

10–15 (GAGKGT) contributes to the ATP binding site. The interval 30–59 (STGDMLRAAVKAGTPLGQQAKKVMDAGELV) is NMP. AMP-binding positions include T31, R36, 57–59 (ELV), 85–88 (GFPR), and Q92. The LID stretch occupies residues 122–159 (GRRVHPGSGRVYHVEHNPPKEEGKDDVTGEPLVQRDDD). ATP contacts are provided by residues R123 and 132-133 (VY). Residues 129–152 (SGRVYHVEHNPPKEEGKDDVTGEP) are disordered. A compositionally biased stretch (basic and acidic residues) spans 133-152 (YHVEHNPPKEEGKDDVTGEP). Residues R156 and R167 each coordinate AMP. An ATP-binding site is contributed by G203.

Belongs to the adenylate kinase family. As to quaternary structure, monomer.

Its subcellular location is the cytoplasm. The catalysed reaction is AMP + ATP = 2 ADP. The protein operates within purine metabolism; AMP biosynthesis via salvage pathway; AMP from ADP: step 1/1. Functionally, catalyzes the reversible transfer of the terminal phosphate group between ATP and AMP. Plays an important role in cellular energy homeostasis and in adenine nucleotide metabolism. The polypeptide is Adenylate kinase (Alkalilimnicola ehrlichii (strain ATCC BAA-1101 / DSM 17681 / MLHE-1)).